We begin with the raw amino-acid sequence, 538 residues long: Calcium-dependent protein kinase 3 (538 aa).

The segment at 23 to 70 (PKKSIERIKKKKDSNKSIKSQHKFEGSKISNKNNELKDVKSKDPKNYE) is disordered. Basic and acidic residues predominate over residues 56–68 (NELKDVKSKDPKN). Positions 112 to 367 (NLSEEPLGKG…ASEALKHPWF (256 aa)) constitute a Protein kinase domain. Residues 118-126 (LGKGTYGCV) and Lys-141 each bind ATP. The active-site Proton acceptor is the Asp-232. The short motif at 387 to 395 (NFKNYALLL) is the J domain autoinhibitory motif element. Residues 387–422 (NFKNYALLLKLQKLAMTIIAQQSNDYDLQQLKAVFL) are j domain. The short motif at 396–405 (KLQKLAMTII) is the J domain EF-hand interaction motif element. EF-hand domains are found at residues 412 to 447 (YDLQ…SGLK), 450 to 481 (QNFD…DRKH), and 482 to 517 (LSKK…VILF). Ca(2+) is bound by residues Asp-460, Asp-462, Ser-464, Arg-466, Glu-471, Asp-495, Asp-497, Asp-499, Glu-501, and Glu-506.

It belongs to the protein kinase superfamily. Ser/Thr protein kinase family. CDPK subfamily. It depends on Mg(2+) as a cofactor.

It localises to the cytoplasm. The enzyme catalyses L-seryl-[protein] + ATP = O-phospho-L-seryl-[protein] + ADP + H(+). It carries out the reaction L-threonyl-[protein] + ATP = O-phospho-L-threonyl-[protein] + ADP + H(+). Its activity is regulated as follows. Activated by calcium. Upon calcium binding to the EF-hand domain 2, the C-terminus of the junction domain (J domain) undergoes a conformational change which results in the dissociation of the pseudo-substrate inhibitory motif from the catalytic domain. This, in turn, may facilitate the autophosphorylation of the activation loop at Thr-273, which leads to the kinase activation. In terms of biological role, calcium-dependent protein kinase which acts as a sensor and effector of intracellular Ca(2+) levels probably in part downstream of cGMP-activated PKG kinase. In the mosquito midgut, regulates the gliding motility of the ookinete which is essential for the ookinete to invade the midgut epithelium. However, another study showed that while required for ookinete invasion of the midgut epithelium, is not required for ookinete gliding motility. The chain is Calcium-dependent protein kinase 3 from Plasmodium yoelii yoelii.